The chain runs to 380 residues: Glucose-1-phosphate adenylyltransferase (380 aa).

Residues Gly-164, 179 to 180 (EK), and Ser-190 contribute to the alpha-D-glucose 1-phosphate site.

It belongs to the bacterial/plant glucose-1-phosphate adenylyltransferase family. As to quaternary structure, homotetramer.

It carries out the reaction alpha-D-glucose 1-phosphate + ATP + H(+) = ADP-alpha-D-glucose + diphosphate. It participates in glycan biosynthesis; glycogen biosynthesis. In terms of biological role, involved in the biosynthesis of ADP-glucose, a building block required for the elongation reactions to produce glycogen. Catalyzes the reaction between ATP and alpha-D-glucose 1-phosphate (G1P) to produce pyrophosphate and ADP-Glc. The protein is Glucose-1-phosphate adenylyltransferase of Streptococcus pneumoniae (strain CGSP14).